A 2007-amino-acid chain; its full sequence is Structural maintenance of chromosomes flexible hinge domain-containing protein 1 (2007 aa).

A2 bears the N-acetylalanine mark. The interval 111–702 (TKERIDFLPH…LSVTWPEGDE (592 aa)) is ATPase activity domain. Position 833 is a phosphoserine (S833). K1350 is modified (N6-acetyllysine). Residue K1375 forms a Glycyl lysine isopeptide (Lys-Gly) (interchain with G-Cter in SUMO2) linkage. A Phosphothreonine modification is found at T1500. One can recognise an SMC hinge domain in the interval 1721-1848 (GDILGKIAHL…DNLDAANHYR (128 aa)). Residue K1803 is modified to N6-succinyllysine. At S1975 the chain carries Phosphoserine. Residues 1984 to 2007 (PIPTKRMRRESTRQNRRPKGDVPN) are disordered.

The protein belongs to the SMC family. Highly divergent. In terms of assembly, homodimer; homodimerizes via its SMC hinge domain. Interacts with LRIF1. In terms of processing, sumoylated with SUMO1. In terms of tissue distribution, during embryogenesis, specifically expressed in immature olfactory sensory neurons.

It is found in the chromosome. The enzyme catalyses ATP + H2O = ADP + phosphate + H(+). In terms of biological role, non-canonical member of the structural maintenance of chromosomes (SMC) protein family that plays a key role in epigenetic silencing by regulating chromatin architecture. Promotes heterochromatin formation in both autosomes and chromosome X, probably by mediating the merge of chromatin compartments. Plays a key role in chromosome X inactivation in females by promoting the spreading of heterochromatin. Recruited to inactivated chromosome X by Xist RNA and acts by mediating the merge of chromatin compartments: promotes random chromatin interactions that span the boundaries of existing structures, leading to create a compartment-less architecture typical of inactivated chromosome X. Required to facilitate Xist RNA spreading. Also required for silencing of a subset of clustered autosomal loci in somatic cells, such as the DUX4 locus. Has ATPase activity; may participate in structural manipulation of chromatin in an ATP-dependent manner as part of its role in gene expression regulation. Also plays a role in DNA repair: localizes to sites of DNA double-strand breaks in response to DNA damage to promote the repair of DNA double-strand breaks. Acts by promoting non-homologous end joining (NHEJ) and inhibiting homologous recombination (HR) repair. Required during preimplantation development, probably acts by regulating chromatin architecture. The chain is Structural maintenance of chromosomes flexible hinge domain-containing protein 1 from Mus musculus (Mouse).